We begin with the raw amino-acid sequence, 320 residues long: o-succinylbenzoate synthase (320 aa).

The active-site Proton donor is K133. Mg(2+)-binding residues include D161, E190, and D213. The active-site Proton acceptor is the K235.

Belongs to the mandelate racemase/muconate lactonizing enzyme family. MenC type 1 subfamily. Requires a divalent metal cation as cofactor.

The enzyme catalyses (1R,6R)-6-hydroxy-2-succinyl-cyclohexa-2,4-diene-1-carboxylate = 2-succinylbenzoate + H2O. The protein operates within quinol/quinone metabolism; 1,4-dihydroxy-2-naphthoate biosynthesis; 1,4-dihydroxy-2-naphthoate from chorismate: step 4/7. It participates in quinol/quinone metabolism; menaquinone biosynthesis. In terms of biological role, converts 2-succinyl-6-hydroxy-2,4-cyclohexadiene-1-carboxylate (SHCHC) to 2-succinylbenzoate (OSB). This chain is o-succinylbenzoate synthase, found in Escherichia coli O6:H1 (strain CFT073 / ATCC 700928 / UPEC).